A 345-amino-acid polypeptide reads, in one-letter code: Protein TRIGALACTOSYLDIACYLGLYCEROL 3, chloroplastic (345 aa).

A chloroplast-targeting transit peptide spans 1-46 (MLSLSCSSSSSSLLPPSLHYHGSSSVQSIVVPRRSLISFRRKVSCC). The 252-residue stretch at 85–336 (IECRDVYKSF…TNPIVQQFAT (252 aa)) folds into the ABC transporter domain. ATP is bound at residue 117-124 (GPSGTGKS).

It belongs to the ABC transporter superfamily. ABCI family. As to quaternary structure, catalytic subunit of the TGD complex, a lipid translocator at the inner chloroplast envelope membrane made of TGD1, TGD2 and TGD3. Interacts with TGD1 and TGD2 with an overall subunit stoichiometry of 2 TGD1, 2 TGD3 and 8 to 12 TGD2. Interacts with TGD5.

The protein resides in the plastid. It localises to the chloroplast stroma. Functionally, ATPase transporter involved in lipid transfer from the endoplasmic reticulum (ER) to plastids, and necessary for thylakoids formation. Not involved in transition metal transport pathways. This chain is Protein TRIGALACTOSYLDIACYLGLYCEROL 3, chloroplastic, found in Arabidopsis thaliana (Mouse-ear cress).